The primary structure comprises 63 residues: Glutamine synthetase translation inhibitor (63 aa).

In terms of biological role, inhibits the synthesis of glutamine synthetase II. This is Glutamine synthetase translation inhibitor (gstI) from Rhizobium leguminosarum.